The primary structure comprises 487 residues: Probable nuclear hormone receptor HR3 (487 aa).

A DNA-binding region (nuclear receptor) is located at residues 48–123; the sequence is IIPCKVCGDK…LGMSRDAVKF (76 aa). 2 consecutive NR C4-type zinc fingers follow at residues 51–71 and 87–111; these read CKVC…CEGC and CPRN…LQKC. Positions 145 to 176 are disordered; it reads MRAQSDAAPDSSVYDTQTPSSSDQLHHNNYNS. Residues 157–167 show a composition bias toward polar residues; it reads VYDTQTPSSSD. Residues 237–480 enclose the NR LBD domain; it reads INDVLIKTLA…PALYKELFSI (244 aa).

This sequence belongs to the nuclear hormone receptor family. NR1 subfamily.

The protein localises to the nucleus. Functionally, putative receptor whose ligand is not yet known. The polypeptide is Probable nuclear hormone receptor HR3 (Drosophila melanogaster (Fruit fly)).